The sequence spans 230 residues: Lipoprotein-releasing system ATP-binding protein LolD (230 aa).

The 219-residue stretch at 10 to 228 (LRAEHLSKVY…QLHMANGRLL (219 aa)) folds into the ABC transporter domain. Residue 46–53 (GASGSGKS) coordinates ATP.

This sequence belongs to the ABC transporter superfamily. Lipoprotein translocase (TC 3.A.1.125) family. As to quaternary structure, the complex is composed of two ATP-binding proteins (LolD) and two transmembrane proteins (LolC and LolE).

It is found in the cell inner membrane. In terms of biological role, part of the ABC transporter complex LolCDE involved in the translocation of mature outer membrane-directed lipoproteins, from the inner membrane to the periplasmic chaperone, LolA. Responsible for the formation of the LolA-lipoprotein complex in an ATP-dependent manner. This Bordetella avium (strain 197N) protein is Lipoprotein-releasing system ATP-binding protein LolD.